We begin with the raw amino-acid sequence, 108 residues long: uncharacterized protein (108 aa).

This is an uncharacterized protein from Rickettsia prowazekii (strain Madrid E).